The sequence spans 202 residues: LexA repressor 1 (202 aa).

The H-T-H motif DNA-binding region spans 28 to 48 (RAEIAQELGFKSPNAAEEHLK). Catalysis depends on for autocatalytic cleavage activity residues serine 123 and lysine 160.

This sequence belongs to the peptidase S24 family. As to quaternary structure, homodimer.

It catalyses the reaction Hydrolysis of Ala-|-Gly bond in repressor LexA.. Its function is as follows. Represses a number of genes involved in the response to DNA damage (SOS response), including recA and lexA. In the presence of single-stranded DNA, RecA interacts with LexA causing an autocatalytic cleavage which disrupts the DNA-binding part of LexA, leading to derepression of the SOS regulon and eventually DNA repair. In Pseudomonas syringae pv. tomato (strain ATCC BAA-871 / DC3000), this protein is LexA repressor 1.